A 380-amino-acid polypeptide reads, in one-letter code: Cytochrome b (380 aa).

Transmembrane regions (helical) follow at residues 34 to 54 (FGSLLGICLITQIATGLFLAM), 78 to 99 (WLVRNIHANGASFFFICIYLHI), 114 to 134 (WNIGVILLFLVMATAFVGYVL), and 179 to 199 (FFAFHFLFPFLIVGASILHLL). Heme b contacts are provided by H84 and H98. 2 residues coordinate heme b: H183 and H197. An a ubiquinone-binding site is contributed by H202. Helical transmembrane passes span 227–247 (YKDTLGFLIMLMMLTLLSMLS), 289–309 (LGGVLALLASIMILMLIPMIH), 321–341 (MTQFLFWLMVSNTLILTWIGG), and 348–368 (FIEIGQAASILYFLLFIIFMP).

The protein belongs to the cytochrome b family. In terms of assembly, the cytochrome bc1 complex contains 3 respiratory subunits (MT-CYB, CYC1 and UQCRFS1), 2 core proteins (UQCRC1 and UQCRC2) and probably 6 low-molecular weight proteins. Heme b serves as cofactor.

Its subcellular location is the mitochondrion inner membrane. Component of the ubiquinol-cytochrome c reductase complex (complex III or cytochrome b-c1 complex) that is part of the mitochondrial respiratory chain. The b-c1 complex mediates electron transfer from ubiquinol to cytochrome c. Contributes to the generation of a proton gradient across the mitochondrial membrane that is then used for ATP synthesis. The sequence is that of Cytochrome b (mt-cyb) from Ranodon sibiricus (Siberian salamander).